We begin with the raw amino-acid sequence, 111 residues long: T cell receptor beta variable 29-1 (111 aa).

The first 16 residues, 1-16, serve as a signal peptide directing secretion; it reads MLSLLLLLLGLGSVFS. The 95-residue stretch at 17–111 folds into the Ig-like domain; the sequence is AVISQKPSRD…DSSIYLCSVE (95 aa). Cysteines 38 and 108 form a disulfide. Asn87 is a glycosylation site (N-linked (GlcNAc...) asparagine).

In terms of assembly, alpha-beta TR is a heterodimer composed of an alpha and beta chain; disulfide-linked. The alpha-beta TR is associated with the transmembrane signaling CD3 coreceptor proteins to form the TR-CD3 (TcR or TCR). The assembly of alpha-beta TR heterodimers with CD3 occurs in the endoplasmic reticulum where a single alpha-beta TR heterodimer associates with one CD3D-CD3E heterodimer, one CD3G-CD3E heterodimer and one CD247 homodimer forming a stable octameric structure. CD3D-CD3E and CD3G-CD3E heterodimers preferentially associate with TR alpha and TR beta chains, respectively. The association of the CD247 homodimer is the last step of TcR assembly in the endoplasmic reticulum and is required for transport to the cell surface.

It is found in the cell membrane. Its function is as follows. V region of the variable domain of T cell receptor (TR) beta chain that participates in the antigen recognition. Alpha-beta T cell receptors are antigen specific receptors which are essential to the immune response and are present on the cell surface of T lymphocytes. Recognize peptide-major histocompatibility (MH) (pMH) complexes that are displayed by antigen presenting cells (APC), a prerequisite for efficient T cell adaptive immunity against pathogens. Binding of alpha-beta TR to pMH complex initiates TR-CD3 clustering on the cell surface and intracellular activation of LCK that phosphorylates the ITAM motifs of CD3G, CD3D, CD3E and CD247 enabling the recruitment of ZAP70. In turn ZAP70 phosphorylates LAT, which recruits numerous signaling molecules to form the LAT signalosome. The LAT signalosome propagates signal branching to three major signaling pathways, the calcium, the mitogen-activated protein kinase (MAPK) kinase and the nuclear factor NF-kappa-B (NF-kB) pathways, leading to the mobilization of transcription factors that are critical for gene expression and essential for T cell growth and differentiation. The T cell repertoire is generated in the thymus, by V-(D)-J rearrangement. This repertoire is then shaped by intrathymic selection events to generate a peripheral T cell pool of self-MH restricted, non-autoaggressive T cells. Post-thymic interaction of alpha-beta TR with the pMH complexes shapes TR structural and functional avidity. The chain is T cell receptor beta variable 29-1 from Homo sapiens (Human).